Reading from the N-terminus, the 386-residue chain is MEINKLVCFSFSLVLILGLVESFHYHERELESEEGFMGMYDRWREQHNIEMRSPERFNVFKYNVRRIHESNKMDKPYKLKVNEFADMTNLEFVNTYANSKISHFQALRGSAPGSIDTDPNKDFIYANVTKIPDKVDWREKNAVTDVKGQGGCGSCWAFAAVVALEGINAIRTGKLVKFSEQQLVDCDMTNAGCDGGLMEPAFTYVIKHGGIAPEASYPYVGKRETCDKAKIKDVLKIDGRQNVPGLDEEALRKAVAHQPVATGIQLSGHGLQFYSEGVYTGDCGTEPNHGVGIVGYGENEKGIKFWTVKNSWGPTWGEKGYIHLQRGARKEGLCGVAMHSSFPIMNDPNPPKDDPNGPKDDPDAPKDPKFKTTQRLQGIRTKLLEL.

A signal peptide spans 1–22 (MEINKLVCFSFSLVLILGLVES). The T-cell epitope. MHC class II peptide able to activate CD(4+) T cells of the ragweed pollen-allergic patients indicated by significantly increased IL-2 production compared to non-allergic individuals. Not recognized by IgE of the patients allergic to ragweed pollen stretch occupies residues 6 to 20 (LVCFSFSLVLILGLV). The propeptide at 23 to 108 (FHYHERELES…SKISHFQALR (86 aa)) is activation peptide. N127 carries an N-linked (GlcNAc...) (complex) asparagine glycan. 3 cysteine pairs are disulfide-bonded: C152-C193, C186-C226, and C283-C334. C155 is an active-site residue. A B-cell epitope. Binds to IgE of the patients allergic to ragweed pollen region spans residues 173 to 186 (GKLVKFSEQQLVDC). Residues H289 and N310 contribute to the active site. Positions 340 to 377 (SSFPIMNDPNPPKDDPNGPKDDPDAPKDPKFKTTQRLQ) are disordered. Residues 350-370 (PPKDDPNGPKDDPDAPKDPKF) are compositionally biased toward basic and acidic residues. The propeptide at 371-386 (KTTQRLQGIRTKLLEL) is removed in mature form.

The protein belongs to the peptidase C1 family. In terms of assembly, homodimer. Autocatalytic proteolytic cleavage of N-terminal activation peptide. In terms of processing, N-glycosylated. Glycosylation is not required for binding to IgE. As to expression, expressed in pollen (at protein and mRNA level).

Its activity is regulated as follows. Activated by L-cysteine. Inhibited by cysteine protease inhibitor E64 (L-trans-epoxysuccinyl-leucylamide-(4-guanido)-butane). Inhibited by cysteine/serine protease inhibitor leupeptin. Not inhibited by serine protease inhibitors 4-(2-aminoethyl)benzenesulfonyl fluoride hydrochloride (AEBSF) and phenylmethanesulfonyl fluoride (PMSF), metallo protease inhibitor bestatin or aspartic protease inhibitor pepstatin A. Functionally, cysteine protease. Hydrolyzes casein and synthetic peptide Boc-Val-Leu-Lys-7-amino-4-methylcoumarin (Boc-VLK-AMC) in vitro. This chain is Cysteine protease Amb a 11.0101, found in Ambrosia artemisiifolia (Common ragweed).